Here is a 421-residue protein sequence, read N- to C-terminus: UPF0415 protein C7orf25 homolog (421 aa).

The protein belongs to the UPF0415 family.

This is UPF0415 protein C7orf25 homolog from Bos taurus (Bovine).